We begin with the raw amino-acid sequence, 534 residues long: Glucans biosynthesis protein D (534 aa).

The segment at residues Met-1–Ala-30 is a signal peptide (tat-type signal).

This sequence belongs to the OpgD/OpgG family. Post-translationally, predicted to be exported by the Tat system. The position of the signal peptide cleavage has not been experimentally proven.

The protein resides in the periplasm. Its pathway is glycan metabolism; osmoregulated periplasmic glucan (OPG) biosynthesis. Probably involved in the control of the structural glucose backbone of osmoregulated periplasmic glucans (OPGs). This Xanthomonas oryzae pv. oryzae (strain PXO99A) protein is Glucans biosynthesis protein D.